The primary structure comprises 309 residues: Homoserine O-succinyltransferase (309 aa).

Cys142 (acyl-thioester intermediate) is an active-site residue. Substrate is bound by residues Lys163 and Ser192. The active-site Proton acceptor is His235. The active site involves Glu237. Residue Arg249 coordinates substrate.

It belongs to the MetA family.

Its subcellular location is the cytoplasm. The catalysed reaction is L-homoserine + succinyl-CoA = O-succinyl-L-homoserine + CoA. The protein operates within amino-acid biosynthesis; L-methionine biosynthesis via de novo pathway; O-succinyl-L-homoserine from L-homoserine: step 1/1. Functionally, transfers a succinyl group from succinyl-CoA to L-homoserine, forming succinyl-L-homoserine. The polypeptide is Homoserine O-succinyltransferase (Yersinia pseudotuberculosis serotype O:1b (strain IP 31758)).